Here is a 360-residue protein sequence, read N- to C-terminus: GTPase Obg (360 aa).

The Obg domain occupies methionine 1–isoleucine 156. Residues alanine 157–proline 360 form the OBG-type G domain. Residues glycine 163–serine 170, phenylalanine 188–valine 192, aspartate 210–glycine 213, asparagine 279–aspartate 282, and serine 341–valine 343 contribute to the GTP site. The Mg(2+) site is built by serine 170 and threonine 190.

The protein belongs to the TRAFAC class OBG-HflX-like GTPase superfamily. OBG GTPase family. In terms of assembly, monomer. Requires Mg(2+) as cofactor.

It is found in the cytoplasm. In terms of biological role, an essential GTPase which binds GTP, GDP and possibly (p)ppGpp with moderate affinity, with high nucleotide exchange rates and a fairly low GTP hydrolysis rate. Plays a role in control of the cell cycle, stress response, ribosome biogenesis and in those bacteria that undergo differentiation, in morphogenesis control. The sequence is that of GTPase Obg from Helicobacter pylori (strain G27).